We begin with the raw amino-acid sequence, 185 residues long: Guanylate kinase (185 aa).

The Guanylate kinase-like domain maps to 4–181 (GALYVVSGPS…ACNDLISIIE (178 aa)). An ATP-binding site is contributed by 11-18 (GPSGAGKS).

This sequence belongs to the guanylate kinase family.

The protein resides in the cytoplasm. The catalysed reaction is GMP + ATP = GDP + ADP. Essential for recycling GMP and indirectly, cGMP. This is Guanylate kinase from Fusobacterium nucleatum subsp. nucleatum (strain ATCC 25586 / DSM 15643 / BCRC 10681 / CIP 101130 / JCM 8532 / KCTC 2640 / LMG 13131 / VPI 4355).